A 492-amino-acid polypeptide reads, in one-letter code: Bifunctional purine biosynthesis protein PurH (492 aa).

The region spanning 1–144 (MKKAILSVSN…KNYKHVTTIV (144 aa)) is the MGS-like domain.

Belongs to the PurH family.

It carries out the reaction (6R)-10-formyltetrahydrofolate + 5-amino-1-(5-phospho-beta-D-ribosyl)imidazole-4-carboxamide = 5-formamido-1-(5-phospho-D-ribosyl)imidazole-4-carboxamide + (6S)-5,6,7,8-tetrahydrofolate. The catalysed reaction is IMP + H2O = 5-formamido-1-(5-phospho-D-ribosyl)imidazole-4-carboxamide. It participates in purine metabolism; IMP biosynthesis via de novo pathway; 5-formamido-1-(5-phospho-D-ribosyl)imidazole-4-carboxamide from 5-amino-1-(5-phospho-D-ribosyl)imidazole-4-carboxamide (10-formyl THF route): step 1/1. The protein operates within purine metabolism; IMP biosynthesis via de novo pathway; IMP from 5-formamido-1-(5-phospho-D-ribosyl)imidazole-4-carboxamide: step 1/1. The chain is Bifunctional purine biosynthesis protein PurH from Staphylococcus aureus (strain JH1).